The chain runs to 166 residues: Cofilin-2 (166 aa).

An N-acetylalanine modification is found at A2. S3 is subject to Phosphoserine. The region spanning 4–153 (GVTVNDEVIK…KDRSTLGEKL (150 aa)) is the ADF-H domain. The residue at position 6 (T6) is a Phosphothreonine. Residues 30–34 (KKRKK) carry the Nuclear localization signal motif.

The protein belongs to the actin-binding proteins ADF family. Post-translationally, the phosphorylation of Ser-24 may prevent recognition of the nuclear localization signal.

It is found in the nucleus matrix. The protein resides in the cytoplasm. Its subcellular location is the cytoskeleton. Controls reversibly actin polymerization and depolymerization in a pH-sensitive manner. It has the ability to bind G- and F-actin in a 1:1 ratio of cofilin to actin. It is the major component of intranuclear and cytoplasmic actin rods. The sequence is that of Cofilin-2 (CFL2) from Bos taurus (Bovine).